Reading from the N-terminus, the 526-residue chain is Arylsulfatase G (526 aa).

The first 16 residues, Met1–Ser16, serve as a signal peptide directing secretion. Ca(2+)-binding residues include Asp44, Asp45, and Cys84. Catalysis depends on Cys84, which acts as the Nucleophile. 3-oxoalanine (Cys) is present on Cys84. A glycan (N-linked (GlcNAc...) asparagine) is linked at Asn117. Lys137 lines the substrate pocket. The active site involves His139. Ser162 contributes to the substrate binding site. An N-linked (GlcNAc...) asparagine glycan is attached at Asn215. His251 is a substrate binding site. Asp302 and Asn303 together coordinate Ca(2+). Residues Asn356 and Asn497 are each glycosylated (N-linked (GlcNAc...) asparagine).

Belongs to the sulfatase family. The cofactor is Ca(2+). In terms of processing, N-glycosylated with both high mannose and complex type sugars. The conversion to 3-oxoalanine (also known as C-formylglycine, FGly), of a serine or cysteine residue in prokaryotes and of a cysteine residue in eukaryotes, is critical for catalytic activity. Post-translationally, 63-kDa precursor undergoes proteolytic processing in two steps, yielding two fragments in the first step (apparent molecular masses of 44 and 18 kDa). In the second step, the 44-kDa fragment is processed further to the 34- and 10-kDa chains. The 10-kDa chain is a cleavage product of the 44-kDa fragment but linked to the 18-kDa chain through a disulfide bridge.

The protein localises to the lysosome. It carries out the reaction an aryl sulfate + H2O = a phenol + sulfate + H(+). The enzyme catalyses Hydrolysis of the 3-sulfate groups of the N-sulfo-D-glucosamine 3-O-sulfate units of heparin.. In terms of biological role, displays arylsulfatase activity at acidic pH towards the artificial substrate p-nitrocatechol sulfate. Catalyzes the hydrolysis of the 3-sulfate groups of the N-sulfo-D-glucosamine 3-O-sulfate units of heparin. This Rattus norvegicus (Rat) protein is Arylsulfatase G (Arsg).